Consider the following 410-residue polypeptide: tRNA-guanine(15) transglycosylase (410 aa).

The active-site Nucleophile is Asp-87. The substrate site is built by Asp-122 and Gly-187.

It belongs to the archaeosine tRNA-ribosyltransferase family. Zn(2+) serves as cofactor.

The catalysed reaction is guanosine(15) in tRNA + 7-cyano-7-deazaguanine = 7-cyano-7-carbaguanosine(15) in tRNA + guanine. The protein operates within tRNA modification; archaeosine-tRNA biosynthesis. In terms of biological role, exchanges the guanine residue with 7-cyano-7-deazaguanine (preQ0) at position 15 in the dihydrouridine loop (D-loop) of archaeal tRNAs. This Nanoarchaeum equitans (strain Kin4-M) protein is tRNA-guanine(15) transglycosylase.